Reading from the N-terminus, the 255-residue chain is Uridylate kinase (255 aa).

ATP is bound at residue 22-25; it reads KLSG. The involved in allosteric activation by GTP stretch occupies residues 30–35; that stretch reads GNGGYG. Gly64 contacts UMP. Residues Gly65 and Arg69 each contribute to the ATP site. UMP contacts are provided by residues Asp85 and 146–153; that span reads TGNPFFTT. ATP-binding residues include Asn174, Tyr180, and Asp183.

This sequence belongs to the UMP kinase family. Homohexamer.

The protein resides in the cytoplasm. It catalyses the reaction UMP + ATP = UDP + ADP. Its pathway is pyrimidine metabolism; CTP biosynthesis via de novo pathway; UDP from UMP (UMPK route): step 1/1. With respect to regulation, allosterically activated by GTP. Inhibited by UTP. Functionally, catalyzes the reversible phosphorylation of UMP to UDP. This Rubrobacter xylanophilus (strain DSM 9941 / JCM 11954 / NBRC 16129 / PRD-1) protein is Uridylate kinase.